The sequence spans 118 residues: Mitochondrial import inner membrane translocase subunit Tim10 B (118 aa).

Positions 31 to 55 match the Twin CX3C motif motif; it reads CFQRCVPSLHHRALDAEEEACLHSC. Disulfide bonds link C31–C55 and C35–C51. A disordered region spans residues 89 to 118; the sequence is SAVPHATAEQLETSPSRSLPSGNLGKGGAG. Residues 98 to 109 are compositionally biased toward polar residues; that stretch reads QLETSPSRSLPS.

Belongs to the small Tim family. In terms of assembly, component of the TIM22 complex, which core is composed of TIMM22, associated with TIMM10 (TIMM10A and/or TIMM10B), TIMM9, AGK and TIMM29.

It is found in the mitochondrion inner membrane. In terms of biological role, component of the TIM22 complex, a complex that mediates the import and insertion of multi-pass transmembrane proteins into the mitochondrial inner membrane. The TIM22 complex forms a twin-pore translocase that uses the membrane potential as the external driving force. In the TIM22 complex, it may act as a docking point for the soluble 70 kDa complex that guides the target proteins in transit through the aqueous mitochondrial intermembrane space. This is Mitochondrial import inner membrane translocase subunit Tim10 B (TIMM10B) from Bos taurus (Bovine).